The chain runs to 552 residues: Probable protein kinase UbiB (552 aa).

A Protein kinase domain is found at 121 to 504 (HFDTVPLASA…QGLQRRVVNA (384 aa)). Residues 127-135 (LASASISQV) and lysine 149 contribute to the ATP site. Aspartate 284 functions as the Proton acceptor in the catalytic mechanism. The next 2 helical transmembrane spans lie at 501–521 (VVNA…YGLH) and 530–550 (IPVW…SAWW).

This sequence belongs to the ABC1 family. UbiB subfamily.

The protein localises to the cell inner membrane. Its pathway is cofactor biosynthesis; ubiquinone biosynthesis [regulation]. Functionally, is probably a protein kinase regulator of UbiI activity which is involved in aerobic coenzyme Q (ubiquinone) biosynthesis. This Xylella fastidiosa (strain M12) protein is Probable protein kinase UbiB.